Reading from the N-terminus, the 511-residue chain is MQVTVTNADGLKRELKVQVPSQELEAKLGAKLDEMKNQVRLKGFRPGKVPVSHLRKTFGKQVMGDVIQETVGESSQQALQDESLRPAFQPSIDLEGEIQDVLDGKADLTFKMSFEVIPAFELSDFSKVSLERLTAEVKDEDIDVALKRLAENQKNFEPREEGAKAETGDLLTIDFVGKIDGEAFEGGSAEDANLEIGSGRFIPGFEEQLVGVKVGDETQVKVAFPADYGAEHLAGKDAVFDVKVKEVKAPAEVKLDDELAKRFGLESMEKLREALGEQMKGEYARMSRMHLKRAMLDKLDELHSFELPPTMVEQEFQQIWQQFEHELSHQNKTAADLDEPEEDVRAEYRKIAERRVRLGLLLAEVGEKNNITVTEQELNQALAERARQFPGQEQQLYRYFQQNPQAIQELRAPIFEDKVVDFIAELAKVEDKVVSRDELFADPDADEHEHHHHDHDHDHDHDHDHDHGHDHDHGDEKPKKKPAAKKAAAKSDDGEAKPAAKKAPAKKKKED.

One can recognise a PPIase FKBP-type domain in the interval glycine 168 to valine 253. Residues aspartate 446–aspartate 511 form a disordered region. Residues histidine 455–proline 478 are compositionally biased toward basic and acidic residues. Over residues lysine 479–alanine 488 the composition is skewed to basic residues. Over residues alanine 489–proline 498 the composition is skewed to basic and acidic residues. Residues alanine 499–aspartate 511 are compositionally biased toward basic residues.

Belongs to the FKBP-type PPIase family. Tig subfamily.

It is found in the cytoplasm. The enzyme catalyses [protein]-peptidylproline (omega=180) = [protein]-peptidylproline (omega=0). Its function is as follows. Involved in protein export. Acts as a chaperone by maintaining the newly synthesized protein in an open conformation. Functions as a peptidyl-prolyl cis-trans isomerase. This is Trigger factor from Parvibaculum lavamentivorans (strain DS-1 / DSM 13023 / NCIMB 13966).